The following is a 511-amino-acid chain: Endoglucanase B (511 aa).

The first 29 residues, 1–29, serve as a signal peptide directing secretion; that stretch reads MNLLSGWVRPLMLGCGLLGAALSAGSIQA. In terms of domain architecture, CBM2 spans 30–130; the sequence is AVCEYRVTNE…AVTGAICGGQ (101 aa). C32 and C127 are oxidised to a cystine. The segment at 137-173 is disordered; it reads SVASSSSSSSVVSSTPRSSSSSVSSSVPGTSSSSSSS. Positions 180 to 209 constitute a CBM10 domain; the sequence is ACNWYGTLTPLCNNTSNGWGYEDGRSCVAR. 2 disulfide bridges follow: C181-C212 and C191-C206. D276 (nucleophile) is an active-site residue. D393 acts as the Proton donor in catalysis.

The protein belongs to the glycosyl hydrolase 45 (cellulase K) family.

It localises to the periplasm. The enzyme catalyses Endohydrolysis of (1-&gt;4)-beta-D-glucosidic linkages in cellulose, lichenin and cereal beta-D-glucans.. In terms of biological role, this enzyme catalyzes the endohydrolysis of 1,4-beta-glucosidic linkages in cellulose, lichenin and cereal beta-D-glucans. EGB is most active against barley beta-glucan, but showed significant activity against amorphous and crystalline cellulose. This is Endoglucanase B (celB) from Cellvibrio japonicus (strain Ueda107) (Pseudomonas fluorescens subsp. cellulosa).